Here is a 483-residue protein sequence, read N- to C-terminus: Probable pectate lyase 12 (483 aa).

A signal peptide spans 1–24; the sequence is MMLQRSCIVLFFSLFLLVPQMVFS. N-linked (GlcNAc...) asparagine glycosylation is found at Asn27 and Asn50. Residues Asp220, Asp244, and Asp248 each contribute to the Ca(2+) site. Arg300 is an active-site residue.

Belongs to the polysaccharide lyase 1 family. Ca(2+) serves as cofactor.

The enzyme catalyses Eliminative cleavage of (1-&gt;4)-alpha-D-galacturonan to give oligosaccharides with 4-deoxy-alpha-D-galact-4-enuronosyl groups at their non-reducing ends.. Its pathway is glycan metabolism; pectin degradation; 2-dehydro-3-deoxy-D-gluconate from pectin: step 2/5. This chain is Probable pectate lyase 12, found in Arabidopsis thaliana (Mouse-ear cress).